The following is a 394-amino-acid chain: Phosphopentomutase (394 aa).

Mn(2+) is bound by residues aspartate 15, aspartate 288, histidine 293, aspartate 329, histidine 330, and histidine 341.

The protein belongs to the phosphopentomutase family. Mn(2+) is required as a cofactor.

The protein localises to the cytoplasm. It catalyses the reaction 2-deoxy-alpha-D-ribose 1-phosphate = 2-deoxy-D-ribose 5-phosphate. The catalysed reaction is alpha-D-ribose 1-phosphate = D-ribose 5-phosphate. It participates in carbohydrate degradation; 2-deoxy-D-ribose 1-phosphate degradation; D-glyceraldehyde 3-phosphate and acetaldehyde from 2-deoxy-alpha-D-ribose 1-phosphate: step 1/2. Isomerase that catalyzes the conversion of deoxy-ribose 1-phosphate (dRib-1-P) and ribose 1-phosphate (Rib-1-P) to deoxy-ribose 5-phosphate (dRib-5-P) and ribose 5-phosphate (Rib-5-P), respectively. This Bacillus licheniformis (strain ATCC 14580 / DSM 13 / JCM 2505 / CCUG 7422 / NBRC 12200 / NCIMB 9375 / NCTC 10341 / NRRL NRS-1264 / Gibson 46) protein is Phosphopentomutase.